The following is a 506-amino-acid chain: MEFSVKSGSPEKQRSACIIVGVFEPRRLSSIAEQLDKISDGYISALLRRGELEGKVGQSLLLHHVPNVLSERILLIGCGKERELDERQYKQIIQKTINTLNETGSMEAVCFLTELHVKGRNNYWKVRQAVETAKESLYAFNQLKSNKNELRRPLRKMVFNVPTRRELTSGERAIQHGLAIAAGIKAAKDLSNMPPNICNAAYLASQARQLADSANSHITTKVIGEEQMKELGMNAYLAVGQGSQNESLMSVMEYKGSSDKHAKPIILVGKGLTFDSGGISIKSAGGMDEMKYDMCGAATVYGVMRVVSELQLPLNVIGVMAGCENMPGGRAYRPGDILTTLSGQTVEVLNTDAEGRLVLCDALTYVERFDPELVIDIATLTGACITALGNHYSGLLSNHNPLAHELLNASEQSGDRAWRLPMTDEFFEQIDSNFADLANTGGSGGGAITAACFLSRFATKYHWAHLDIAGTAWRSGKTKGATGRPVALLSQFLLNRAGSAGINNDD.

Positions 270 and 275 each coordinate Mn(2+). Residue Lys-282 is part of the active site. Residues Asp-293, Asp-352, and Glu-354 each coordinate Mn(2+). Arg-356 is a catalytic residue.

This sequence belongs to the peptidase M17 family. Requires Mn(2+) as cofactor.

The protein localises to the cytoplasm. The catalysed reaction is Release of an N-terminal amino acid, Xaa-|-Yaa-, in which Xaa is preferably Leu, but may be other amino acids including Pro although not Arg or Lys, and Yaa may be Pro. Amino acid amides and methyl esters are also readily hydrolyzed, but rates on arylamides are exceedingly low.. It carries out the reaction Release of an N-terminal amino acid, preferentially leucine, but not glutamic or aspartic acids.. Its function is as follows. Presumably involved in the processing and regular turnover of intracellular proteins. Catalyzes the removal of unsubstituted N-terminal amino acids from various peptides. The polypeptide is Probable cytosol aminopeptidase (Photorhabdus laumondii subsp. laumondii (strain DSM 15139 / CIP 105565 / TT01) (Photorhabdus luminescens subsp. laumondii)).